The chain runs to 222 residues: Disulfide bond formation protein D (222 aa).

An N-terminal signal peptide occupies residues 1–36 (MKKKQQSSAKFAVILTVVVVVLLAAIVIINNKTEQG). Residues 37-220 (NDAVSGQPSI…IKETIEKELK (184 aa)) form the Thioredoxin domain. A disulfide bond links C69 and C72.

This sequence belongs to the thioredoxin family. DsbA subfamily.

It is found in the cell membrane. The protein resides in the membrane raft. Its function is as follows. Required for the stabilization, possibly via formation of a disulfide bond, of the obligatory competence protein ComGC. May be required for the stability of secreted proteins with disulfide bonds. Not required for sporulation. The sequence is that of Disulfide bond formation protein D (bdbD) from Bacillus subtilis (strain 168).